The sequence spans 341 residues: Ketol-acid reductoisomerase (NADP(+)) (341 aa).

The KARI N-terminal Rossmann domain occupies 2–182 (TDIVYDKDAD…GGLRAGGIRT (181 aa)). NADP(+) contacts are provided by residues 25–28 (YGSQ), K48, S51, S53, and 83–86 (DQHQ). H108 is an active-site residue. G134 is a binding site for NADP(+). A KARI C-terminal knotted domain is found at 183-328 (TFTEETETDL…RELRKLFAWN (146 aa)). Residues D191, E195, E227, and E231 each contribute to the Mg(2+) site. S252 provides a ligand contact to substrate.

It belongs to the ketol-acid reductoisomerase family. Mg(2+) is required as a cofactor.

The enzyme catalyses (2R)-2,3-dihydroxy-3-methylbutanoate + NADP(+) = (2S)-2-acetolactate + NADPH + H(+). The catalysed reaction is (2R,3R)-2,3-dihydroxy-3-methylpentanoate + NADP(+) = (S)-2-ethyl-2-hydroxy-3-oxobutanoate + NADPH + H(+). It functions in the pathway amino-acid biosynthesis; L-isoleucine biosynthesis; L-isoleucine from 2-oxobutanoate: step 2/4. The protein operates within amino-acid biosynthesis; L-valine biosynthesis; L-valine from pyruvate: step 2/4. Functionally, involved in the biosynthesis of branched-chain amino acids (BCAA). Catalyzes an alkyl-migration followed by a ketol-acid reduction of (S)-2-acetolactate (S2AL) to yield (R)-2,3-dihydroxy-isovalerate. In the isomerase reaction, S2AL is rearranged via a Mg-dependent methyl migration to produce 3-hydroxy-3-methyl-2-ketobutyrate (HMKB). In the reductase reaction, this 2-ketoacid undergoes a metal-dependent reduction by NADPH to yield (R)-2,3-dihydroxy-isovalerate. This Clavibacter sepedonicus (Clavibacter michiganensis subsp. sepedonicus) protein is Ketol-acid reductoisomerase (NADP(+)).